The chain runs to 393 residues: High mobility group protein DSP1 (393 aa).

Residues 153 to 179 (QMQQQQQQQNVINSASPMSRVKADAKP) are disordered. DNA-binding regions (HMG box) lie at residues 179 to 249 (PRGR…QNYV) and 271 to 339 (PKRS…TEYK). Low complexity predominate over residues 364 to 374 (LLAAAAQQQHQ). The interval 364–393 (LLAAAAQQQHQQLEEQHDDDDGDGDDDENQ) is disordered. The segment covering 379–393 (QHDDDDGDGDDDENQ) has biased composition (acidic residues).

Belongs to the HMGB family.

The protein localises to the nucleus. It is found in the chromosome. Functionally, binds preferentially single-stranded DNA and unwinds double-stranded DNA. The chain is High mobility group protein DSP1 (Dsp1) from Drosophila melanogaster (Fruit fly).